The primary structure comprises 82 residues: Large ribosomal subunit protein eL14 (82 aa).

Belongs to the eukaryotic ribosomal protein eL14 family.

The chain is Large ribosomal subunit protein eL14 from Pyrococcus abyssi (strain GE5 / Orsay).